A 509-amino-acid chain; its full sequence is Heat shock 70 kDa protein 14 (509 aa).

The protein belongs to the heat shock protein 70 family. Component of ribosome-associated complex (RAC), a heterodimer composed of Hsp70/DnaK-type chaperone HSPA14 and Hsp40/DnaJ-type chaperone DNAJC2.

It is found in the cytoplasm. Its subcellular location is the cytosol. Functionally, component of the ribosome-associated complex (RAC), a complex involved in folding or maintaining nascent polypeptides in a folding-competent state. In the RAC complex, binds to the nascent polypeptide chain, while DNAJC2 stimulates its ATPase activity. This is Heat shock 70 kDa protein 14 (Hspa14) from Mus musculus (Mouse).